Reading from the N-terminus, the 744-residue chain is Polyadenylate-binding protein, cytoplasmic and nuclear (744 aa).

Over residues 1 to 11 (MSEVANSTSPV) the composition is skewed to polar residues. Positions 1–42 (MSEVANSTSPVQDGADANGAQINTNVPAASGDAPTPTTAAQQ) are disordered. The span at 33 to 42 (APTPTTAAQQ) shows a compositional bias: low complexity. RRM domains lie at 48–126 (ASLY…WSQR), 136–213 (GNVF…HHIP), 229–306 (TNIY…RAQK), and 332–462 (VNLY…LAQR). Disordered regions lie at residues 368–411 (EEKK…AGDK), 527–550 (GRGAGFPGGMPGQQGGRGGPNAQQ), 607–651 (IAGG…PGVD), and 723–744 (VKNKEGDGEKEAPKEESKEEKA). Residues 376 to 397 (KEVKEEKKEDEKKEDEEAKEGS) are compositionally biased toward basic and acidic residues. Gly residues-rich tracts occupy residues 527–545 (GRGAGFPGGMPGQQGGRGG), 609–632 (GGPGIRGGQGGFPQGGRGAPGGRG), and 640–649 (PQGGRPGGPG). The PABC domain maps to 647 to 724 (GPGVDMSVLS…AMSVYDEYVK (78 aa)).

The protein belongs to the polyadenylate-binding protein type-1 family.

It is found in the cytoplasm. It localises to the nucleus. In terms of biological role, binds the poly(A) tail of mRNA. Appears to be an important mediator of the multiple roles of the poly(A) tail in mRNA biogenesis, stability and translation. In the nucleus, involved in both mRNA cleavage and polyadenylation. Is also required for efficient mRNA export to the cytoplasm. Acts in concert with a poly(A)-specific nuclease (PAN) to affect poly(A) tail shortening, which may occur concomitantly with either nucleocytoplasmic mRNA transport or translational initiation. In the cytoplasm, stimulates translation initiation and regulates mRNA decay through translation termination-coupled poly(A) shortening, probably mediated by PAN. This is Polyadenylate-binding protein, cytoplasmic and nuclear (PAB1) from Phaeosphaeria nodorum (strain SN15 / ATCC MYA-4574 / FGSC 10173) (Glume blotch fungus).